The chain runs to 318 residues: Ubiquitin-like domain-containing CTD phosphatase 1 (318 aa).

The Ubiquitin-like domain maps to 3-81 (LSLIIKWGGQ…IMMMGTREES (79 aa)). The region spanning 133 to 294 (PREGKKLLVL…VKLSQYLKEI (162 aa)) is the FCP1 homology domain. Mg(2+)-binding residues include D143, D145, and D253.

The cofactor is Mg(2+).

The protein resides in the nucleus. The enzyme catalyses O-phospho-L-seryl-[protein] + H2O = L-seryl-[protein] + phosphate. The catalysed reaction is O-phospho-L-threonyl-[protein] + H2O = L-threonyl-[protein] + phosphate. In terms of biological role, dephosphorylates 26S nuclear proteasomes, thereby decreasing their proteolytic activity. Recruited to the 19S regulatory particle of the 26S proteasome where it dephosphorylates 19S component psmc2 which impairs psmc2 ATPase activity and disrupts 26S proteasome assembly. Has also been reported to stimulate the proteolytic activity of the 26S proteasome. In Xenopus laevis (African clawed frog), this protein is Ubiquitin-like domain-containing CTD phosphatase 1 (ublcp1).